Reading from the N-terminus, the 651-residue chain is DNA endonuclease RBBP8 (651 aa).

Coiled coils occupy residues 35-84 (LQEL…EDRL) and 117-138 (ISELEAERKTLTDENRRLSLEL). 3 disordered regions span residues 138 to 199 (LERL…PESR), 363 to 433 (NGRL…EHQA), and 487 to 539 (YESC…SDKS). Residues 363–379 (NGRLQSKNQETSEIETT) show a composition bias toward polar residues. The segment covering 380–391 (QDSKKKCLDGHT) has biased composition (basic and acidic residues). Positions 503–515 (VYEEEREEDDPEE) are enriched in acidic residues. A compositionally biased stretch (basic and acidic residues) spans 525 to 539 (RPADRKPLVSDSDKS). Thr599 and Thr611 each carry phosphothreonine.

Belongs to the COM1/SAE2/CtIP family. In terms of assembly, homotetramer; formed by antiparallel association of helical extensions protruding from the N-termini of two parallel coiled-coil dimers. Interacts with the MRN complex; the interaction links DNA sensing to resection. Interacts with samhd1. In terms of processing, phosphorylation at Thr-599 and Thr-611 promote interaction with nbn and recruitment to double-strand breaks (DSBs).

The protein resides in the nucleus. It localises to the chromosome. In terms of biological role, endonuclease that cooperates with the MRE11-RAD50-NBN (MRN) complex in DNA-end resection, the first step of double-strand break (DSB) repair through the homologous recombination (HR) pathway. Functions downstream of the MRN complex and ATM, promotes ATR activation and its recruitment to DSBs in the S/G2 phase facilitating the generation of ssDNA. Specifically promotes the endonuclease activity of the MRN complex to clear DNA ends containing protein adducts: recruited to DSBs by nbn following phosphorylation, and promotes the endonuclease of mre11 to clear protein-DNA adducts and generate clean double-strand break ends. In Danio rerio (Zebrafish), this protein is DNA endonuclease RBBP8 (rbbp8).